The chain runs to 284 residues: Diaminopimelate epimerase (284 aa).

Residues N14 and N67 each contribute to the substrate site. C76 serves as the catalytic Proton donor. Residues 77–78 (GN), N166, N199, and 217–218 (ER) contribute to the substrate site. The active-site Proton acceptor is the C226. 227-228 (GT) serves as a coordination point for substrate.

Belongs to the diaminopimelate epimerase family. In terms of assembly, homodimer.

It localises to the cytoplasm. The catalysed reaction is (2S,6S)-2,6-diaminopimelate = meso-2,6-diaminopimelate. The protein operates within amino-acid biosynthesis; L-lysine biosynthesis via DAP pathway; DL-2,6-diaminopimelate from LL-2,6-diaminopimelate: step 1/1. Catalyzes the stereoinversion of LL-2,6-diaminopimelate (L,L-DAP) to meso-diaminopimelate (meso-DAP), a precursor of L-lysine and an essential component of the bacterial peptidoglycan. In Bacillus velezensis (strain DSM 23117 / BGSC 10A6 / LMG 26770 / FZB42) (Bacillus amyloliquefaciens subsp. plantarum), this protein is Diaminopimelate epimerase.